We begin with the raw amino-acid sequence, 344 residues long: MLQKISQSISLCNGDQFKPLIYLAGAPTNFISSPLSGKKKSSSLRIKRIQQLQSTLEDRINPPLVCGTVSPRLSVPDHILKPLYVESSKVPEISSELQIPDSIGIVKMKKACELAARVLDYAGTLVRPFVTTDEIDKAVHQMVIEFGAYPSPLGYGGFPKSVCTSVNECMFHGIPDSRPLQNGDIINIDVAVYLDGYHGDTSKTFLCGDVNGSLKQLVKVTEECLEKGISVCKDGASFKQIGKIISEHAAKYGYNMERFIGHGVGTVLHSEPLIYLHSNYDYELEYMIEGQTFTLEPILTIGTTEFVTWPDKWTIVTADGGPAAQFEHTILITTTGAEILTISS.

Histidine 172 contributes to the substrate binding site. A divalent metal cation-binding residues include aspartate 189, aspartate 200, and histidine 262. Residue histidine 269 coordinates substrate. 2 residues coordinate a divalent metal cation: glutamate 296 and glutamate 327.

This sequence belongs to the peptidase M24A family. Methionine aminopeptidase type 1 subfamily. It depends on Co(2+) as a cofactor. The cofactor is Zn(2+). Mn(2+) is required as a cofactor. Fe(2+) serves as cofactor. In terms of tissue distribution, ubiquitous.

Its subcellular location is the plastid. It is found in the chloroplast. The protein resides in the mitochondrion. The enzyme catalyses Release of N-terminal amino acids, preferentially methionine, from peptides and arylamides.. Its function is as follows. Removes the N-terminal methionine from nascent proteins. The N-terminal methionine is often cleaved when the second residue in the primary sequence is small and uncharged (Met-Ala-, Cys, Gly, Pro, Ser, Thr, or Val). In Arabidopsis thaliana (Mouse-ear cress), this protein is Methionine aminopeptidase 1C, chloroplastic/mitochondrial (MAP1C).